The chain runs to 1044 residues: DEMETER-like protein 3 (1044 aa).

Residues 1-15 (MLTDGSQHTYQNGET) are compositionally biased toward polar residues. The tract at residues 1-107 (MLTDGSQHTY…KPRNPATTRL (107 aa)) is disordered. Residues 16 to 30 (KNSKEHERKCDESAH) show a composition bias toward basic and acidic residues. Basic residues predominate over residues 38 to 53 (THKKKEKKNSKEKHGI). A compositionally biased stretch (basic and acidic residues) spans 54–66 (KHSESEHLQDDIS). Over residues 71 to 89 (GKGRRRNSKGTPKKLRFNR) the composition is skewed to basic residues. The tract at residues 348–445 (KVNLDPETIK…AFMSVAAKFP (98 aa)) is DEMETER. [4Fe-4S] cluster contacts are provided by Cys678, Cys685, Cys688, and Cys694. The interval 1024–1044 (VRRLHTPPDERGPKFMSDDDI) is disordered.

The protein belongs to the DNA glycosylase family. DEMETER subfamily. It depends on [4Fe-4S] cluster as a cofactor.

The protein localises to the nucleus. In terms of biological role, potential transcriptional activator that may act by nicking the target promoter. Catalyzes the release of 5-methylcytosine (5-meC) from DNA by a glycosylase/lyase mechanism. This Arabidopsis thaliana (Mouse-ear cress) protein is DEMETER-like protein 3 (DML3).